The primary structure comprises 126 residues: Protein ApaG (126 aa).

The ApaG domain occupies 2–126 (SDPRYQIDVS…FRLAVPGALH (125 aa)).

The protein is Protein ApaG of Pseudomonas putida (strain W619).